We begin with the raw amino-acid sequence, 377 residues long: MSLPELKNFRRIVVKVGSSLLIDSAAGEVRATWLAALAADIAALHRDGRDVMVVSSGSIALGRSRLKLPRGPLKLEESQAAAAVGQIALARIWSEVLGAHGIGAGQILVTFQDTEERRRYLNARSTIAKLLEWRAVPVINENDTVATAEIRYGDNDRLAARVATMASADLLILLSDIDGLYTAPPVANPDAELIPVVESVSAEIEAMAGGAESELSRGGMYTKIEAAKIATTAGTHMLIANGKIEHPLQAIADGGRCTWFLTPANPVTARKRWIAGSLEPKGTLTIDAGAVTALRAGKSLLPAGVIRVDGQFARGDAVLVRGPDTHEIGRGLVAYDAEDADKIKGRSSPDVLIILGISGRSEMIHRDDLVIGSVPGV.

Lys15 is a binding site for ATP. The substrate site is built by Ser56, Asp143, and Asn155. Position 175–176 (175–176 (SD)) interacts with ATP. Residues 281–358 (KGTLTIDAGA…PDVLIILGIS (78 aa)) form the PUA domain.

Belongs to the glutamate 5-kinase family.

It localises to the cytoplasm. It carries out the reaction L-glutamate + ATP = L-glutamyl 5-phosphate + ADP. It participates in amino-acid biosynthesis; L-proline biosynthesis; L-glutamate 5-semialdehyde from L-glutamate: step 1/2. Its function is as follows. Catalyzes the transfer of a phosphate group to glutamate to form L-glutamate 5-phosphate. This is Glutamate 5-kinase from Rhodopseudomonas palustris (strain BisA53).